The chain runs to 137 residues: Small heat shock protein IbpA (137 aa).

Positions 28 to 137 constitute a sHSP domain; sequence TQSNGGYPPY…AMKPRRIEIK (110 aa).

The protein belongs to the small heat shock protein (HSP20) family. As to quaternary structure, monomer. Forms homomultimers of about 100-150 subunits at optimal growth temperatures. Conformation changes to monomers at high temperatures or high ionic concentrations.

The protein resides in the cytoplasm. Associates with aggregated proteins, together with IbpB, to stabilize and protect them from irreversible denaturation and extensive proteolysis during heat shock and oxidative stress. Aggregated proteins bound to the IbpAB complex are more efficiently refolded and reactivated by the ATP-dependent chaperone systems ClpB and DnaK/DnaJ/GrpE. Its activity is ATP-independent. The sequence is that of Small heat shock protein IbpA from Pectobacterium atrosepticum (strain SCRI 1043 / ATCC BAA-672) (Erwinia carotovora subsp. atroseptica).